The sequence spans 317 residues: MNVLLMAYGTPYAPEEVEPYYTDIRRGRRPSEELLKELAERYEAIGKSPLNEITLAQAVRLQALLNLEAPPYPKRLLGPFPPRAPHGPARVYVGTKHWHPSIGEAVAAMHEDGVRRAVAIVAAPHYSLRSVAEYREKVDSALKTLPEPIDFVWVESYEAHPGLIAAYARRLEEVIWRLKNPGKAAYVFTAHSIPLSAVEKGDPYPRQVEKTAELIAKKLALPRFHVAYQSAGRTPEPWLGPDINELLRTLKEEGYEEVAVQAVGFPADHLEVFYDLDLEAQATARELGLRLLRARSLNADLDYIQVLKDLVEAAWPR.

Fe cation-binding residues include H191 and E271.

The protein belongs to the ferrochelatase family.

Its subcellular location is the cytoplasm. The catalysed reaction is heme b + 2 H(+) = protoporphyrin IX + Fe(2+). The protein operates within porphyrin-containing compound metabolism; protoheme biosynthesis; protoheme from protoporphyrin-IX: step 1/1. Its function is as follows. Catalyzes the ferrous insertion into protoporphyrin IX. This chain is Ferrochelatase, found in Thermus thermophilus (strain ATCC BAA-163 / DSM 7039 / HB27).